Consider the following 97-residue polypeptide: Large ribosomal subunit protein bL27 (97 aa).

Residues 1–12 (MLNLNLANLQFM) constitute a propeptide that is removed on maturation. Residues 15-37 (KKGGGSTSNGRDSQAKRLGAKAA) are disordered.

The protein belongs to the bacterial ribosomal protein bL27 family. The N-terminus is cleaved by ribosomal processing cysteine protease Prp.

This is Large ribosomal subunit protein bL27 from Streptococcus suis (strain 98HAH33).